A 456-amino-acid chain; its full sequence is Neurexin-3-beta (456 aa).

The N-terminal stretch at 1–35 (MHLRIHARRNPPRRPAWTLGIWSLFWGCIVSSVWS) is a signal peptide. Topologically, residues 36–381 (SSNVASSSSS…EVIRESSSTT (346 aa)) are extracellular. The segment at 41–63 (SSSSSPGSHSQHEHHFHGSKHHS) is disordered. The span at 52–63 (HEHHFHGSKHHS) shows a compositional bias: basic residues. A Laminin G-like domain is found at 82–282 (ATYIFGKSGG…NPNIKINGSV (201 aa)). Ca(2+) contacts are provided by Asp134 and Ile151. Asn181 is a glycosylation site (N-linked (GlcNAc...) asparagine). Residues Ile233 and Asn235 each coordinate Ca(2+). 2 N-linked (GlcNAc...) asparagine glycosylation sites follow: Asn279 and Asn323. Residues 316 to 340 (ATTTTRKNRSTASIQPTSDDLVSSA) form a disordered region. Residues 325-340 (STASIQPTSDDLVSSA) are compositionally biased toward polar residues. O-linked (Xyl...) (heparan sulfate) serine glycosylation is present at Ser339. A helical membrane pass occupies residues 382-402 (GMVVGIVAAAALCILILLYAM). At 403-456 (YKYRNRDEGSYQVDETRNYISNSAQSNGTLLKEKPPSSKGGHKKQKNKDKEYYV) the chain is on the cytoplasmic side. A disordered region spans residues 424-456 (NSAQSNGTLLKEKPPSSKGGHKKQKNKDKEYYV).

The protein belongs to the neurexin family. Weakly interacts with CBLN1 and CBLN2. Very weak binding, if any, to CBLN4. Specific isoforms bind neuroligins NLGN1, NLGN2 and NLGN3. Interacts with CLSTN3. Processed by alpha-secretase leading to the formation of an extracellular soluble protein as well as a C-terminal membrane-embedded fragment (CTF). Proteolysis of these CTFs by gamma-secretase releases intracellular domains (ICDs) and extracellular peptides. Post-translationally, O-glycosylated; contains heparan sulfate. Heparan sulfate attachment is required for synapse development by mediating interactions with neuroligins.

It localises to the presynaptic cell membrane. The protein resides in the secreted. Functionally, neuronal cell surface protein that may be involved in cell recognition and cell adhesion. May mediate intracellular signaling. Functions as part of a trans-synaptic complex by binding to cerebellins and postsynaptic GRID1. This interaction helps regulate the activity of NMDA and AMPA receptors at hippocampal synapses without affecting synapse formation. NRXN3B-CBLN2-GRID1 complex transduce presynaptic signals into postsynaptic AMPAR response. The polypeptide is Neurexin-3-beta (NRXN3) (Bos taurus (Bovine)).